Here is a 539-residue protein sequence, read N- to C-terminus: Alpha-aminoadipic semialdehyde dehydrogenase (539 aa).

The N-terminal 26 residues, 1–26 (MWRVPRRLCVQSVKTSKLSGPWSRPA), are a transit peptide targeting the mitochondrion. K86, K94, and K97 each carry N6-acetyllysine; alternate. K86, K94, and K97 each carry N6-succinyllysine; alternate. NAD(+)-binding positions include 192-194 (TAF), K218, 258-259 (GT), 274-275 (GS), 274-279 (GSTQVG), and 296-297 (EL). E296 acts as the Proton acceptor in catalysis. C330 functions as the Nucleophile in the catalytic mechanism. T331 is a (S)-2-amino-6-oxohexanoate binding site. E427 is an NAD(+) binding site. K462 carries the N6-acetyllysine modification. Positions 489 and 490 each coordinate (S)-2-amino-6-oxohexanoate. K500 bears the N6-acetyllysine mark. An N6-succinyllysine modification is found at K537.

This sequence belongs to the aldehyde dehydrogenase family. As to quaternary structure, homotetramer. In terms of tissue distribution, present in liver, kidney, brain and pancreas, and at lower levels in jejunum, duodenum, stomach and testes (at protein level).

It localises to the cytoplasm. The protein localises to the cytosol. The protein resides in the nucleus. Its subcellular location is the mitochondrion. It catalyses the reaction nonanal + NAD(+) + H2O = nonanoate + NADH + 2 H(+). The catalysed reaction is (S)-2-amino-6-oxohexanoate + NAD(+) + H2O = L-2-aminoadipate + NADH + 2 H(+). It carries out the reaction betaine aldehyde + NAD(+) + H2O = glycine betaine + NADH + 2 H(+). The enzyme catalyses an aldehyde + NAD(+) + H2O = a carboxylate + NADH + 2 H(+). It catalyses the reaction hexanal + NAD(+) + H2O = hexanoate + NADH + 2 H(+). The catalysed reaction is octanal + NAD(+) + H2O = octanoate + NADH + 2 H(+). It carries out the reaction (E)-non-2-enal + NAD(+) + H2O = (E)-non-2-enoate + NADH + 2 H(+). The enzyme catalyses (E)-4-hydroxynon-2-enal + NAD(+) + H2O = (E)-4-hydroxynon-2-enoate + NADH + 2 H(+). It functions in the pathway amine and polyamine biosynthesis; betaine biosynthesis via choline pathway; betaine from betaine aldehyde: step 1/1. Functionally, multifunctional enzyme mediating important protective effects. Metabolizes betaine aldehyde to betaine, an important cellular osmolyte and methyl donor. Protects cells from oxidative stress by metabolizing a number of lipid peroxidation-derived aldehydes. Involved in lysine catabolism. The sequence is that of Alpha-aminoadipic semialdehyde dehydrogenase from Mus musculus (Mouse).